Here is a 236-residue protein sequence, read N- to C-terminus: Leucyl/phenylalanyl-tRNA--protein transferase (236 aa).

Belongs to the L/F-transferase family.

It localises to the cytoplasm. It catalyses the reaction N-terminal L-lysyl-[protein] + L-leucyl-tRNA(Leu) = N-terminal L-leucyl-L-lysyl-[protein] + tRNA(Leu) + H(+). It carries out the reaction N-terminal L-arginyl-[protein] + L-leucyl-tRNA(Leu) = N-terminal L-leucyl-L-arginyl-[protein] + tRNA(Leu) + H(+). The catalysed reaction is L-phenylalanyl-tRNA(Phe) + an N-terminal L-alpha-aminoacyl-[protein] = an N-terminal L-phenylalanyl-L-alpha-aminoacyl-[protein] + tRNA(Phe). Functionally, functions in the N-end rule pathway of protein degradation where it conjugates Leu, Phe and, less efficiently, Met from aminoacyl-tRNAs to the N-termini of proteins containing an N-terminal arginine or lysine. This chain is Leucyl/phenylalanyl-tRNA--protein transferase, found in Idiomarina loihiensis (strain ATCC BAA-735 / DSM 15497 / L2-TR).